The sequence spans 324 residues: Mevalonate-3-kinase (324 aa).

Leu19 provides a ligand contact to substrate. 109 to 112 (SGSS) provides a ligand contact to ATP. Substrate contacts are provided by Glu145 and Arg149. Residues Arg190 and Ser193 each coordinate ATP.

This sequence belongs to the GHMP kinase family. As to quaternary structure, homodimer.

It carries out the reaction (R)-mevalonate + ATP = (R)-3-phosphomevalonate + ADP + H(+). It participates in isoprenoid biosynthesis; isopentenyl diphosphate biosynthesis via mevalonate pathway. Functionally, catalyzes the phosphorylation of mevalonate (MVA) to yield mevalonate-3-phosphate. Functions in an alternative mevalonate pathway, which passes through mevalonate 3-phosphate rather than mevalonate 5-phosphate. Also able to catalyze the formation of isobutene via the conversion of 3-hydroxyisovalerate (3-HIV) to an unstable 3-phosphate intermediate that undergoes a spontaneous decarboxylation. The chain is Mevalonate-3-kinase from Picrophilus torridus (strain ATCC 700027 / DSM 9790 / JCM 10055 / NBRC 100828 / KAW 2/3).